The chain runs to 228 residues: Ribulose-phosphate 3-epimerase (228 aa).

Ser-9 lines the substrate pocket. A divalent metal cation is bound by residues His-34, Asp-36, His-68, and Asp-177. The Proton acceptor role is filled by Asp-36. Substrate contacts are provided by residues His-68, 177–179, and 199–200; these read DGG and GS. Residue Asp-177 is the Proton donor of the active site.

It belongs to the ribulose-phosphate 3-epimerase family. A divalent metal cation is required as a cofactor.

It carries out the reaction D-ribulose 5-phosphate = D-xylulose 5-phosphate. The protein operates within carbohydrate degradation. Its function is as follows. Catalyzes the reversible epimerization of D-ribulose 5-phosphate to D-xylulose 5-phosphate. The sequence is that of Ribulose-phosphate 3-epimerase from Buchnera aphidicola subsp. Acyrthosiphon pisum (strain APS) (Acyrthosiphon pisum symbiotic bacterium).